We begin with the raw amino-acid sequence, 128 residues long: Arginine decarboxylase proenzyme (128 aa).

The active-site Schiff-base intermediate with substrate; via pyruvic acid is the Ser-76. Ser-76 is subject to Pyruvic acid (Ser); by autocatalysis. The Proton acceptor; for processing activity role is filled by His-81. Catalysis depends on Cys-96, which acts as the Proton donor; for catalytic activity.

This sequence belongs to the prokaryotic AdoMetDC family. Type 1 subfamily. As to quaternary structure, heterooctamer of four alpha and four beta chains arranged as a tetramer of alpha/beta heterodimers. It depends on pyruvate as a cofactor. In terms of processing, is synthesized initially as an inactive proenzyme. Formation of the active enzyme involves a self-maturation process in which the active site pyruvoyl group is generated from an internal serine residue via an autocatalytic post-translational modification. Two non-identical subunits are generated from the proenzyme in this reaction, and the pyruvate is formed at the N-terminus of the alpha chain, which is derived from the carboxyl end of the proenzyme. The post-translation cleavage follows an unusual pathway, termed non-hydrolytic serinolysis, in which the side chain hydroxyl group of the serine supplies its oxygen atom to form the C-terminus of the beta chain, while the remainder of the serine residue undergoes an oxidative deamination to produce ammonia and the pyruvoyl group blocking the N-terminus of the alpha chain.

The enzyme catalyses L-arginine + H(+) = agmatine + CO2. The protein operates within amine and polyamine biosynthesis; agmatine biosynthesis; agmatine from L-arginine: step 1/1. Functionally, specifically catalyzes the decarboxylation of L-arginine to agmatine. Has no S-adenosylmethionine decarboxylase (AdoMetDC) activity. The polypeptide is Arginine decarboxylase proenzyme (Sulfurisphaera tokodaii (strain DSM 16993 / JCM 10545 / NBRC 100140 / 7) (Sulfolobus tokodaii)).